The sequence spans 313 residues: Carbamate kinase 2 (313 aa).

The protein belongs to the carbamate kinase family.

The protein resides in the cytoplasm. The enzyme catalyses hydrogencarbonate + NH4(+) + ATP = carbamoyl phosphate + ADP + H2O + H(+). It functions in the pathway metabolic intermediate metabolism; carbamoyl phosphate degradation; CO(2) and NH(3) from carbamoyl phosphate: step 1/1. This is Carbamate kinase 2 (arcC2) from Staphylococcus aureus (strain USA300).